We begin with the raw amino-acid sequence, 293 residues long: Ribosomal RNA small subunit methyltransferase A (293 aa).

Asparagine 29, leucine 31, glycine 56, glutamate 77, aspartate 102, and asparagine 127 together coordinate S-adenosyl-L-methionine.

Belongs to the class I-like SAM-binding methyltransferase superfamily. rRNA adenine N(6)-methyltransferase family. RsmA subfamily.

The protein localises to the cytoplasm. It carries out the reaction adenosine(1518)/adenosine(1519) in 16S rRNA + 4 S-adenosyl-L-methionine = N(6)-dimethyladenosine(1518)/N(6)-dimethyladenosine(1519) in 16S rRNA + 4 S-adenosyl-L-homocysteine + 4 H(+). Its function is as follows. Specifically dimethylates two adjacent adenosines (A1518 and A1519) in the loop of a conserved hairpin near the 3'-end of 16S rRNA in the 30S particle. May play a critical role in biogenesis of 30S subunits. The chain is Ribosomal RNA small subunit methyltransferase A from Geobacillus kaustophilus (strain HTA426).